Consider the following 243-residue polypeptide: 3-deoxy-manno-octulosonate cytidylyltransferase (243 aa).

Belongs to the KdsB family.

The protein resides in the cytoplasm. It carries out the reaction 3-deoxy-alpha-D-manno-oct-2-ulosonate + CTP = CMP-3-deoxy-beta-D-manno-octulosonate + diphosphate. It participates in nucleotide-sugar biosynthesis; CMP-3-deoxy-D-manno-octulosonate biosynthesis; CMP-3-deoxy-D-manno-octulosonate from 3-deoxy-D-manno-octulosonate and CTP: step 1/1. The protein operates within bacterial outer membrane biogenesis; lipopolysaccharide biosynthesis. Its function is as follows. Activates KDO (a required 8-carbon sugar) for incorporation into bacterial lipopolysaccharide in Gram-negative bacteria. The protein is 3-deoxy-manno-octulosonate cytidylyltransferase of Bartonella tribocorum (strain CIP 105476 / IBS 506).